A 190-amino-acid chain; its full sequence is Potassium-transporting ATPase KdpC subunit (190 aa).

Residues 10 to 30 (TFLFLLLITGGVYPLLTTALG) traverse the membrane as a helical segment.

This sequence belongs to the KdpC family. As to quaternary structure, the system is composed of three essential subunits: KdpA, KdpB and KdpC.

Its subcellular location is the cell inner membrane. In terms of biological role, part of the high-affinity ATP-driven potassium transport (or Kdp) system, which catalyzes the hydrolysis of ATP coupled with the electrogenic transport of potassium into the cytoplasm. This subunit acts as a catalytic chaperone that increases the ATP-binding affinity of the ATP-hydrolyzing subunit KdpB by the formation of a transient KdpB/KdpC/ATP ternary complex. The chain is Potassium-transporting ATPase KdpC subunit from Shigella flexneri serotype 5b (strain 8401).